Reading from the N-terminus, the 215-residue chain is Adenylate kinase (215 aa).

Residue 10 to 15 (GAGKGT) participates in ATP binding. Residues 30-59 (STGDILRANVREGTELGLAAKAYMDKGELV) form an NMP region. AMP is bound by residues Thr31, Arg36, 57-59 (ELV), 85-88 (GYPR), and Gln92. Residues 126-162 (GRLMCKCGASYHTIANPPKKDNICDICGGEVYQRDDD) form an LID region. Residue Arg127 participates in ATP binding. Zn(2+) contacts are provided by Cys130 and Cys132. Residue 135 to 136 (SY) coordinates ATP. Zn(2+) is bound by residues Cys149 and Cys152. 2 residues coordinate AMP: Arg159 and Arg170. Lys198 contributes to the ATP binding site.

It belongs to the adenylate kinase family. As to quaternary structure, monomer.

The protein localises to the cytoplasm. It carries out the reaction AMP + ATP = 2 ADP. It participates in purine metabolism; AMP biosynthesis via salvage pathway; AMP from ADP: step 1/1. Functionally, catalyzes the reversible transfer of the terminal phosphate group between ATP and AMP. Plays an important role in cellular energy homeostasis and in adenine nucleotide metabolism. The chain is Adenylate kinase from Methanosarcina mazei (strain ATCC BAA-159 / DSM 3647 / Goe1 / Go1 / JCM 11833 / OCM 88) (Methanosarcina frisia).